Reading from the N-terminus, the 176-residue chain is Ribosome rescue factor SmrB (176 aa).

One can recognise a Smr domain in the interval 98–173 (LDLHGLNQYQ…NDAAIMVIIE (76 aa)).

This sequence belongs to the SmrB family. As to quaternary structure, associates with collided ribosomes, but not with correctly translating polysomes.

Acts as a ribosome collision sensor. Detects stalled/collided disomes (pairs of ribosomes where the leading ribosome is stalled and a second ribosome has collided with it) and endonucleolytically cleaves mRNA at the 5' boundary of the stalled ribosome. Stalled/collided disomes form a new interface (primarily via the 30S subunits) that binds SmrB. Cleaved mRNA becomes available for tmRNA ligation, leading to ribosomal subunit dissociation and rescue of stalled ribosomes. The protein is Ribosome rescue factor SmrB of Buchnera aphidicola subsp. Schizaphis graminum (strain Sg).